The sequence spans 344 residues: Acireductone dioxygenase (344 aa).

Residues H92, H94, E98, and H137 each coordinate Fe(2+). H92, H94, E98, and H137 together coordinate Ni(2+).

It belongs to the acireductone dioxygenase (ARD) family. It depends on Fe(2+) as a cofactor. Ni(2+) serves as cofactor.

Its subcellular location is the cytoplasm. The protein resides in the nucleus. The catalysed reaction is 1,2-dihydroxy-5-(methylsulfanyl)pent-1-en-3-one + O2 = 4-methylsulfanyl-2-oxobutanoate + formate + 2 H(+). It catalyses the reaction 1,2-dihydroxy-5-(methylsulfanyl)pent-1-en-3-one + O2 = 3-(methylsulfanyl)propanoate + CO + formate + 2 H(+). It participates in amino-acid biosynthesis; L-methionine biosynthesis via salvage pathway; L-methionine from S-methyl-5-thio-alpha-D-ribose 1-phosphate: step 5/6. Catalyzes 2 different reactions between oxygen and the acireductone 1,2-dihydroxy-3-keto-5-methylthiopentene (DHK-MTPene) depending upon the metal bound in the active site. Fe-containing acireductone dioxygenase (Fe-ARD) produces formate and 2-keto-4-methylthiobutyrate (KMTB), the alpha-ketoacid precursor of methionine in the methionine recycle pathway. Ni-containing acireductone dioxygenase (Ni-ARD) produces methylthiopropionate, carbon monoxide and formate, and does not lie on the methionine recycle pathway. This chain is Acireductone dioxygenase, found in Leishmania major.